Consider the following 103-residue polypeptide: MSKQRIRIRLKAFDHRLIDRSASEIVETAKRTGARVKGPIPLPTKMERFTVLISPHVNKDARDQYEIRTHKRLMDIMDPTDKTVDALMKLDLAAGVDVQIKLN.

It belongs to the universal ribosomal protein uS10 family. As to quaternary structure, part of the 30S ribosomal subunit.

In terms of biological role, involved in the binding of tRNA to the ribosomes. This Thioalkalivibrio sulfidiphilus (strain HL-EbGR7) protein is Small ribosomal subunit protein uS10.